A 336-amino-acid polypeptide reads, in one-letter code: Quinolinate synthase (336 aa).

Residues histidine 25 and serine 42 each contribute to the iminosuccinate site. Cysteine 86 lines the [4Fe-4S] cluster pocket. Iminosuccinate contacts are provided by residues 117–119 and serine 138; that span reads YIN. Cysteine 198 is a [4Fe-4S] cluster binding site. Iminosuccinate is bound by residues 224-226 and threonine 241; that span reads HPE. Cysteine 288 contributes to the [4Fe-4S] cluster binding site.

It belongs to the quinolinate synthase family. Type 3 subfamily. [4Fe-4S] cluster is required as a cofactor.

Its subcellular location is the cytoplasm. The catalysed reaction is iminosuccinate + dihydroxyacetone phosphate = quinolinate + phosphate + 2 H2O + H(+). The protein operates within cofactor biosynthesis; NAD(+) biosynthesis; quinolinate from iminoaspartate: step 1/1. Catalyzes the condensation of iminoaspartate with dihydroxyacetone phosphate to form quinolinate. In Helicobacter pylori (strain ATCC 700392 / 26695) (Campylobacter pylori), this protein is Quinolinate synthase.